The following is a 363-amino-acid chain: Endopolygalacturonase A (363 aa).

The signal sequence occupies residues 1–20 (MQLLQSSVIAATVGAALVAA). A propeptide spanning residues 21–28 (VPVELEAR) is cleaved from the precursor. Cysteines 31 and 46 form a disulfide. PbH1 repeat units follow at residues 158 to 187 (SDNL…DVGS), 188 to 209 (STYI…AINS), 210 to 230 (GSHI…SIGS), 239 to 260 (VEDV…RIKT), 268 to 290 (VSNV…IVEQ), and 302 to 347 (TNGI…SITG). Asparagine 162 is a glycosylation site (N-linked (GlcNAc...) asparagine). Residue aspartate 202 is the Proton donor of the active site. A disulfide bridge connects residues cysteine 204 and cysteine 220. The active site involves histidine 224. Intrachain disulfides connect cysteine 330–cysteine 335 and cysteine 354–cysteine 363.

The protein belongs to the glycosyl hydrolase 28 family.

Its subcellular location is the secreted. The catalysed reaction is (1,4-alpha-D-galacturonosyl)n+m + H2O = (1,4-alpha-D-galacturonosyl)n + (1,4-alpha-D-galacturonosyl)m.. In terms of biological role, involved in maceration and soft-rotting of plant tissue. Hydrolyzes the 1,4-alpha glycosidic bonds of de-esterified pectate in the smooth region of the plant cell wall. The chain is Endopolygalacturonase A (pgaA) from Aspergillus flavus (strain ATCC MYA-384 / AF70).